Reading from the N-terminus, the 353-residue chain is Photosystem II D2 protein (353 aa).

Threonine 2 is subject to N-acetylthreonine. Threonine 2 is modified (phosphothreonine). Residues 41-61 (CAYFALGGWFTGTTFVTSWYT) form a helical membrane-spanning segment. Histidine 118 lines the chlorophyll a pocket. A helical transmembrane segment spans residues 125–141 (GFMLRQFEIARSVNLRP). The pheophytin a site is built by glutamine 130 and asparagine 143. Residues 153–166 (VFVSVFLIYPLGQS) traverse the membrane as a helical segment. Histidine 198 contributes to the chlorophyll a binding site. Residues 208-228 (AALLCAIHGATVENTLFEDGD) form a helical membrane-spanning segment. Positions 215 and 262 each coordinate a plastoquinone. A Fe cation-binding site is contributed by histidine 215. Residue histidine 269 coordinates Fe cation. The chain crosses the membrane as a helical span at residues 279-295 (GLWMSAIGVVGLALNLR).

This sequence belongs to the reaction center PufL/M/PsbA/D family. In terms of assembly, PSII is composed of 1 copy each of membrane proteins PsbA, PsbB, PsbC, PsbD, PsbE, PsbF, PsbH, PsbI, PsbJ, PsbK, PsbL, PsbM, PsbT, PsbX, PsbY, PsbZ, Psb30/Ycf12, at least 3 peripheral proteins of the oxygen-evolving complex and a large number of cofactors. It forms dimeric complexes. The D1/D2 heterodimer binds P680, chlorophylls that are the primary electron donor of PSII, and subsequent electron acceptors. It shares a non-heme iron and each subunit binds pheophytin, quinone, additional chlorophylls, carotenoids and lipids. There is also a Cl(-1) ion associated with D1 and D2, which is required for oxygen evolution. The PSII complex binds additional chlorophylls, carotenoids and specific lipids. is required as a cofactor.

It localises to the plastid. The protein resides in the chloroplast thylakoid membrane. It carries out the reaction 2 a plastoquinone + 4 hnu + 2 H2O = 2 a plastoquinol + O2. In terms of biological role, photosystem II (PSII) is a light-driven water:plastoquinone oxidoreductase that uses light energy to abstract electrons from H(2)O, generating O(2) and a proton gradient subsequently used for ATP formation. It consists of a core antenna complex that captures photons, and an electron transfer chain that converts photonic excitation into a charge separation. The D1/D2 (PsbA/PsbD) reaction center heterodimer binds P680, the primary electron donor of PSII as well as several subsequent electron acceptors. D2 is needed for assembly of a stable PSII complex. The sequence is that of Photosystem II D2 protein from Tetradesmus obliquus (Green alga).